The primary structure comprises 337 residues: MYETLFWQFAKIWAVLIPLFLAVAYFTYVERRVIGHMQDRRGPNRVGPRGLLQPIADALKLLFKEITIPTYASRTLFLIAPAMAIMPALAAWAVIPFDDGLVVADINAGLLYILAMTSLGVYGLIIAGWASNSKYALLGTLRASAQVVSYEIAMGFALVGVLIAAGTMNLSGIVHAQAGPFWEWFWLPLLPLFLIYWISGVAETNRAPFDIAEGESEIVAGFHVEYSGMAFAVFFLAEYANMLLISFLAATLFLGGWHSPFEGLPVLGPAFDWVPGIVWLFAKAAFFAFCYLWFRATFPRYRYDQLMRLGWKVLIPGTVVWLVVLTGLVYGGVGPWF.

The next 8 membrane-spanning stretches (helical) occupy residues 9–29 (FAKI…FTYV), 77–97 (FLIA…VIPF), 110–130 (LLYI…AGWA), 154–174 (MGFA…SGIV), 181–201 (FWEW…ISGV), 229–249 (MAFA…SFLA), 274–294 (VPGI…YLWF), and 313–333 (VLIP…YGGV).

It belongs to the complex I subunit 1 family. NDH-1 is composed of 14 different subunits. Subunits NuoA, H, J, K, L, M, N constitute the membrane sector of the complex.

It is found in the cell inner membrane. It catalyses the reaction a quinone + NADH + 5 H(+)(in) = a quinol + NAD(+) + 4 H(+)(out). Functionally, NDH-1 shuttles electrons from NADH, via FMN and iron-sulfur (Fe-S) centers, to quinones in the respiratory chain. The immediate electron acceptor for the enzyme in this species is believed to be ubiquinone. Couples the redox reaction to proton translocation (for every two electrons transferred, four hydrogen ions are translocated across the cytoplasmic membrane), and thus conserves the redox energy in a proton gradient. This subunit may bind ubiquinone. The chain is NADH-quinone oxidoreductase subunit H from Halorhodospira halophila (strain DSM 244 / SL1) (Ectothiorhodospira halophila (strain DSM 244 / SL1)).